The primary structure comprises 275 residues: Phosphonoacetaldehyde hydrolase (275 aa).

D15 acts as the Nucleophile in catalysis. Residues D15 and A17 each contribute to the Mg(2+) site. K56 functions as the Schiff-base intermediate with substrate in the catalytic mechanism. D189 provides a ligand contact to Mg(2+).

The protein belongs to the HAD-like hydrolase superfamily. PhnX family. As to quaternary structure, homodimer. Requires Mg(2+) as cofactor.

The enzyme catalyses phosphonoacetaldehyde + H2O = acetaldehyde + phosphate + H(+). Its activity is regulated as follows. Inhibited by phosphite, moderately inhibited by phosphonic acids, the corresponding aminophosphonic acids activate the enzyme. Functionally, involved in phosphonate degradation. In Pseudomonas aeruginosa (strain ATCC 15692 / DSM 22644 / CIP 104116 / JCM 14847 / LMG 12228 / 1C / PRS 101 / PAO1), this protein is Phosphonoacetaldehyde hydrolase.